We begin with the raw amino-acid sequence, 22 residues long: Mu-conotoxin MIIIA (22 aa).

Pyrrolidone carboxylic acid is present on Gln-1. Cystine bridges form between Cys-3-Cys-15, Cys-4-Cys-21, and Cys-10-Cys-22. A Cysteine amide modification is found at Cys-22.

It belongs to the conotoxin M superfamily. As to expression, expressed by the venom duct.

The protein localises to the secreted. Functionally, mu-conotoxins block voltage-gated sodium channels (Nav). This synthetic toxin potently blocks rNav1.3/SCN3A. It also moderately blocks rNav1.1/SCN1A, rNav1.2/SCN2A, rNav1.4/SCN4A, mNav1.6/SCN8A, and Nav1.7/SCN9A. sodium channels. This block is very slowly reversible. The protein is Mu-conotoxin MIIIA of Conus magus (Magical cone).